The chain runs to 160 residues: Putative pre-16S rRNA nuclease (160 aa).

The protein belongs to the YqgF nuclease family.

It is found in the cytoplasm. In terms of biological role, could be a nuclease involved in processing of the 5'-end of pre-16S rRNA. The chain is Putative pre-16S rRNA nuclease from Cereibacter sphaeroides (strain KD131 / KCTC 12085) (Rhodobacter sphaeroides).